A 95-amino-acid polypeptide reads, in one-letter code: Citrate lyase acyl carrier protein (95 aa).

Position 14 is an O-(phosphoribosyl dephospho-coenzyme A)serine (serine 14).

Belongs to the CitD family. Oligomer with a subunit composition of (alpha,beta,gamma)6.

It is found in the cytoplasm. Functionally, covalent carrier of the coenzyme of citrate lyase. The polypeptide is Citrate lyase acyl carrier protein (Haemophilus influenzae (strain PittGG)).